Reading from the N-terminus, the 318-residue chain is Peptidyl-prolyl cis-trans isomerase CPR4 (318 aa).

Residues 1 to 20 form the signal peptide; the sequence is MWLKSLLLCLYSLVLCQVHA. A PPIase cyclophilin-type domain is found at 55 to 225; it reads YFDPVSKSMK…HELRFLYFVL (171 aa). N166 carries an N-linked (GlcNAc...) asparagine glycan. The chain crosses the membrane as a helical span at residues 286–303; the sequence is ISRALMCLTVLGLCFIAY.

The protein localises to the membrane. It catalyses the reaction [protein]-peptidylproline (omega=180) = [protein]-peptidylproline (omega=0). Functionally, PPIases accelerate the folding of proteins. It catalyzes the cis-trans isomerization of proline imidic peptide bonds in oligopeptides. This is Peptidyl-prolyl cis-trans isomerase CPR4 (CPR4) from Saccharomyces cerevisiae (strain ATCC 204508 / S288c) (Baker's yeast).